The primary structure comprises 411 residues: Carbohydrate sulfotransferase 1 (411 aa).

The Cytoplasmic segment spans residues 1–2 (MQ). A helical; Signal-anchor for type II membrane protein membrane pass occupies residues 3–23 (CSWKAVLLLALASIAIQYTAI). Over 24–411 (RTFTAKSFHT…VEERDFRPFS (388 aa)) the chain is Lumenal. N56 carries N-linked (GlcNAc...) asparagine glycosylation. 3'-phosphoadenylyl sulfate is bound at residue 69–75 (TRSGSSF). N145 and N189 each carry an N-linked (GlcNAc...) asparagine glycan. A 3'-phosphoadenylyl sulfate-binding site is contributed by 234 to 242 (RDPRGILAS). N-linked (GlcNAc...) asparagine glycosylation occurs at N334. The Cell attachment site signature appears at 337 to 339 (RGD).

This sequence belongs to the sulfotransferase 1 family. Gal/GlcNAc/GalNAc subfamily. Widely expressed at low level. Expressed in brain and skeletal muscle. Expressed by high endothelial cells (HEVs) and leukocytes.

The protein resides in the golgi apparatus membrane. The enzyme catalyses 3'-phosphoadenylyl sulfate + keratan = adenosine 3',5'-bisphosphate + keratan 6'-sulfate.. It functions in the pathway glycan metabolism. In terms of biological role, sulfotransferase that utilizes 3'-phospho-5'-adenylyl sulfate (PAPS) as sulfonate donor to catalyze the transfer of sulfate to position 6 of internal galactose (Gal) residues of keratan. Cooperates with B4GALT4 and B3GNT7 glycosyltransferases and CHST6 sulfotransferase to construct and elongate disulfated disaccharide unit [-&gt;3(6-sulfoGalbeta)1-&gt;4(6-sulfoGlcNAcbeta)1-&gt;] within keratan sulfate polymer. Has a preference for sulfating keratan sulfate, but it also transfers sulfate to the unsulfated polymer. Involved in biosynthesis of phosphacan, a major keratan sulfate proteoglycan in the developing brain. Involved in biosynthesis of 6-sulfoGalbeta-containing O-linked glycans in high endothelial venules of lymph nodes. May act in a synergistic manner with CHST4 to generate sialyl 6',6-disulfo Lewis X motif, a recognition determinant for immune cell receptors implicated in leukocyte trafficking. Catalyzes sulfation of N-acetyllactosamine (LacNAc) oligosaccharides with highest efficiency for sialylated LacNAc structures. This is Carbohydrate sulfotransferase 1 from Homo sapiens (Human).